The sequence spans 1039 residues: MTSLQHIINRRDWENPITVQVNQVKAHSPLNGFKTIEDARENTQSQKKSLNGQWDFKLFDKPEAVDESLLYEKISKELSGDWQSITVPSNWQLHGFDKPIYCNVKYPFAVNPPFVPSDNPTGCYRTEFTITPEQLTQRNHIIFEGVNSAFHLWCNGQWVGYSQDSRLPSEFDLSELLVVGTNRIAVMVIRWSDGSYLEDQDMWWLSGIFRDVNLLTKPQSQIRDVFITPDLDACYRDATLHIKTAINAPNNYQVAVQIFDGKTSLCEPKIQSTNNKRVDEKGGWSDVVFQTIAIRSPKKWTAETPYLYRCVVSLLDEQGNTVDVEAYNIGFRKVEMLNGQLCVNGKPLLIRGVNRHEHHPENGHAVSTADMIEDIKLMKQNNFNAVRTAHYPNHPLFYELCDELGLYVVDEANIETHGMFPMGRLASDPLWAGAFMSRYTQMVERDKNHASIIIWSLGNECGHGANHDAMYGWSKSFDPSRPVQYEGGGANTTATDIICPMYSRVDTDIKDDAVPKYSIKKWLSLPGETRPLILCEYAHAMGNSLGSFDDYWQAFREYPRLQGGFIWDWVDQGLSKIDENGKHYWAYGGDFGDELNDRQFCINGLLFPDRTPHPSLFEAKYSQQHLQFTLREQNQNQNQNQYSIDVFSDYVFRHTDNEKLVWQLIQNGVCVEQGEMALNIAPQSTHTLTIKTKTAFEHGAQYYLNLDVALINDSHFANANHVMDSEQFKLINSNNLNSKSFASATEKSVISVNETDSHLSIENNTFKLVFNQQSGLIEQWLQDDTQVISSPLVDNFYRAPLDNDIGVSEVDNLDPNAWEARWSRAGIGQWQRTCSSINAVQSSVDVRITCVFNYEFNGVLQAQTQWLYTLNNTGTISLNVDVNLNDTLPPMPRIGLSTTINKQSDTKVNWLGLGPFENYPDRKSAARFGYYSLSLNELYTPYIFPTDNGLRSDCQLLSINNLIVTGAFLFAASEYSQNMLTQAKHTNELIADDCIHVHIDHQHMGVGGDDSWSPSTHKEYLLEQKNYNYSLTLTGGITT.

The substrate site is built by N103 and D201. D201 contributes to the Na(+) binding site. Residues E415, H417, and E460 each contribute to the Mg(2+) site. Substrate is bound by residues E460 and 536-539 (EYAH). Residue E460 is the Proton donor of the active site. The Nucleophile role is filled by E536. Position 596 (N596) interacts with Mg(2+). Na(+) is bound by residues F600 and N603. Positions 603 and 1012 each coordinate substrate.

It belongs to the glycosyl hydrolase 2 family. Homotetramer. Mg(2+) is required as a cofactor. It depends on Na(+) as a cofactor.

It carries out the reaction Hydrolysis of terminal non-reducing beta-D-galactose residues in beta-D-galactosides.. Inhibited by zinc, copper and nickel ions. Activated by 2-mercaptoethanol and inhibited by EDTA in vitro. The polypeptide is Beta-galactosidase (lacZ) (Pseudoalteromonas haloplanktis (Alteromonas haloplanktis)).